Consider the following 20-residue polypeptide: Elastase (20 aa).

A Peptidase S1 domain is found at 1-20 (VVGGEVARAHSWPWQISLQY).

It belongs to the peptidase S1 family. Elastase subfamily.

Digests most rapidly at the C-terminal side of alanine residues, but also cleaves at valine and leucine residues. This is Elastase from Gadus morhua (Atlantic cod).